The primary structure comprises 292 residues: Acetylglutamate kinase (292 aa).

Residues 64 to 65 (GG), R86, and N190 contribute to the substrate site.

This sequence belongs to the acetylglutamate kinase family. ArgB subfamily.

The protein resides in the cytoplasm. The enzyme catalyses N-acetyl-L-glutamate + ATP = N-acetyl-L-glutamyl 5-phosphate + ADP. It functions in the pathway amino-acid biosynthesis; L-arginine biosynthesis; N(2)-acetyl-L-ornithine from L-glutamate: step 2/4. Its function is as follows. Catalyzes the ATP-dependent phosphorylation of N-acetyl-L-glutamate. This is Acetylglutamate kinase from Leptospira biflexa serovar Patoc (strain Patoc 1 / Ames).